The chain runs to 310 residues: Ribosomal RNA small subunit methyltransferase H (310 aa).

S-adenosyl-L-methionine-binding positions include 32 to 34, Asp-52, Phe-79, Asp-100, and Gln-107; that span reads GGH.

Belongs to the methyltransferase superfamily. RsmH family.

It is found in the cytoplasm. It catalyses the reaction cytidine(1402) in 16S rRNA + S-adenosyl-L-methionine = N(4)-methylcytidine(1402) in 16S rRNA + S-adenosyl-L-homocysteine + H(+). Specifically methylates the N4 position of cytidine in position 1402 (C1402) of 16S rRNA. The chain is Ribosomal RNA small subunit methyltransferase H from Bacillus cereus (strain B4264).